We begin with the raw amino-acid sequence, 248 residues long: Probable transcriptional regulatory protein SO_2432 (248 aa).

This sequence belongs to the TACO1 family.

It localises to the cytoplasm. This Shewanella oneidensis (strain ATCC 700550 / JCM 31522 / CIP 106686 / LMG 19005 / NCIMB 14063 / MR-1) protein is Probable transcriptional regulatory protein SO_2432.